A 426-amino-acid chain; its full sequence is MSHSASLYAEAQQLIPGGVNSPVRAFNGVGGTPLFIASADGARLTDADGNSYIDYVGSWGPMVLGHNHPAIRQAVLDAVQRGLSFGAPTEIEVKMARLLTELVPSIESVRMVNSGTEATMSTIRLARGYTGRDRVIKFEGCYHGHADGLLVKAGSGALTLGQPSSPGVPADYAKYTLTCSYNDLQSVREAFTLYPREIACVIVEPVAGNMNCVPPLPEFLPGLRALCDEFGALLIIDEVMTGFRVELGGAQAYYDVKPDLTCLGKIIGGGMPVGAFGGRREVMAALAPTGPVYQAGTLSGNPVAIAAGYACLREVARPGVHQQLTQQTERLAQGLLAAAEAAGVPLVVNRVGGMFGLFFTESPTVTCFQDVQACDVDRFKRFFHLMLAAGVYLAPSAFEAGFMSLAHGDAEIRHTVEAAAQSFAQL.

N6-(pyridoxal phosphate)lysine is present on Lys265.

The protein belongs to the class-III pyridoxal-phosphate-dependent aminotransferase family. HemL subfamily. In terms of assembly, homodimer. The cofactor is pyridoxal 5'-phosphate.

It localises to the cytoplasm. The catalysed reaction is (S)-4-amino-5-oxopentanoate = 5-aminolevulinate. The protein operates within porphyrin-containing compound metabolism; protoporphyrin-IX biosynthesis; 5-aminolevulinate from L-glutamyl-tRNA(Glu): step 2/2. The protein is Glutamate-1-semialdehyde 2,1-aminomutase of Sodalis glossinidius (strain morsitans).